The sequence spans 456 residues: Histidine--tRNA ligase (456 aa).

Belongs to the class-II aminoacyl-tRNA synthetase family. In terms of assembly, homodimer.

The protein localises to the cytoplasm. It carries out the reaction tRNA(His) + L-histidine + ATP = L-histidyl-tRNA(His) + AMP + diphosphate + H(+). The chain is Histidine--tRNA ligase from Borrelia garinii subsp. bavariensis (strain ATCC BAA-2496 / DSM 23469 / PBi) (Borreliella bavariensis).